Consider the following 80-residue polypeptide: Putative membrane protein insertion efficiency factor (80 aa).

Positions 61–80 (KTGKDPIPDHFSLKRNQEGE) are disordered. Positions 62-80 (TGKDPIPDHFSLKRNQEGE) are enriched in basic and acidic residues.

It belongs to the UPF0161 family.

It localises to the cell membrane. Could be involved in insertion of integral membrane proteins into the membrane. The sequence is that of Putative membrane protein insertion efficiency factor from Streptococcus pneumoniae (strain CGSP14).